A 500-amino-acid polypeptide reads, in one-letter code: L-2-amino-4-chloropent-4-enoate dechlorinase/desaturase (500 aa).

The residue at position 311 (Lys-311) is an N6-(pyridoxal phosphate)lysine.

Belongs to the trans-sulfuration enzymes family. The cofactor is pyridoxal 5'-phosphate.

The catalysed reaction is L-2-amino-4-chloropent-4-enoate = L-propargylglycine + chloride + H(+). It participates in amino-acid metabolism. The protein operates within antibiotic biosynthesis. Functionally, involved in the biosynthesis of terminal alkyne-containing amino acids such as L-propargylglycine (Pra) and L-beta-ethynylserine, that are produced as antibiotics by S.cattleya. Catalyzes gamma-elimination of chloride from 4-chloro-allyl-L-glycine (also named L-2-amino-4-chloropent-4-enoate), followed by an isomerization, to form the terminal-alkyne product L-propargylglycine. The chain is L-2-amino-4-chloropent-4-enoate dechlorinase/desaturase from Streptantibioticus cattleyicolor (strain ATCC 35852 / DSM 46488 / JCM 4925 / NBRC 14057 / NRRL 8057) (Streptomyces cattleya).